Reading from the N-terminus, the 333-residue chain is Cinnamoyl-CoA reductase 1 (333 aa).

NADP(+)-binding positions include 13–19, arginine 38, lysine 44, 64–65, 84–86, tyrosine 157, lysine 161, 184–187, and serine 199; these read GAGGFIA, DL, TAS, and PVLV. A disulfide bridge links cysteine 150 with cysteine 158. Residue lysine 161 is the Proton donor of the active site.

It belongs to the NAD(P)-dependent epimerase/dehydratase family. Dihydroflavonol-4-reductase subfamily. The formation of a reversible disulfide bond reduces activity by perturbing the positioning of nearby catalytic residues. Expressed in flowers, leaves and stems.

The protein resides in the cytoplasm. The catalysed reaction is (E)-coniferaldehyde + NADP(+) + CoA = (E)-feruloyl-CoA + NADPH + H(+). It catalyses the reaction (E)-4-coumaraldehyde + NADP(+) + CoA = (E)-4-coumaroyl-CoA + NADPH + H(+). The enzyme catalyses (E)-sinapaldehyde + NADP(+) + CoA = (E)-sinapoyl-CoA + NADPH + H(+). It carries out the reaction (E)-cinnamaldehyde + NADP(+) + CoA = (E)-cinnamoyl-CoA + NADPH + H(+). It participates in aromatic compound metabolism; phenylpropanoid biosynthesis. With respect to regulation, inhibited by sodium iodide-mediated oxidation. In terms of biological role, involved in the latter stages of lignin biosynthesis. Catalyzes one of the last steps of monolignol biosynthesis, the conversion of cinnamoyl-CoAs into their corresponding cinnamaldehydes. Mediates the conversion of feruloyl CoA to coniferylaldehyde. Also active toward p-coumaroyl-CoA and sinapoyl-CoA. Involved in the production of floral volatile phenylpropanoids in flowers of fragrant cultivars (e.g. cv. Mitchell and cv. V26) from cinnamic acid, a common precursor with the anthocyanin biosynthesis pathway involved in flower pigmentation. The chain is Cinnamoyl-CoA reductase 1 from Petunia hybrida (Petunia).